The chain runs to 418 residues: MAPRGRRRPRPHRSEGARRSKNTLERTHSMKDKAGQKCKPIDVFDFPDNSDVSSIGRLGENEKDEETYETFDPPLHSTAIYADEEEFSKHCGLSLSSTPPGKEAKRSSDTSGNEASEIESVKISAKKPGRKLRPISDDSESIEESDTRRKVKSAEKISTQRHEVIRTTASSELSEKPAESVTSKKTGPLSAQPSVEKENLAIESQSKTQKKGKISHDKRKKSRSKAIGSDTSDIVHIWCPEGMKTSDIKELNIVLPEFEKTHLEHQQRIESKVCKAAIATFYVNVKEQFIKMLKESQMLTNLKRKNAKMISDIEKKRQRMIEVQDELLRLEPQLKQLQTKYDELKERKSSLRNAAYFLSNLKQLYQDYSDVQAQEPNVKETYDSSSLPALLFKARTLLGAESHLRNINHQLEKLLDQG.

Residues 1-11 (MAPRGRRRPRP) are compositionally biased toward basic residues. The tract at residues 1–76 (MAPRGRRRPR…TYETFDPPLH (76 aa)) is disordered. A Nuclear localization signal motif is present at residues 6 to 23 (RRRPRPHRSEGARRSKNT). Positions 12–42 (HRSEGARRSKNTLERTHSMKDKAGQKCKPID) are enriched in basic and acidic residues. Threonine 78 bears the Phosphothreonine; by PLK1 mark. A disordered region spans residues 88–227 (SKHCGLSLSS…KRKKSRSKAI (140 aa)). Phosphothreonine is present on threonine 98. Position 108 is a phosphoserine (serine 108). Threonine 110 is modified (phosphothreonine). 3 positions are modified to phosphoserine: serine 111, serine 116, and serine 120. Over residues 124–133 (SAKKPGRKLR) the composition is skewed to basic residues. Serine 136, serine 139, and serine 141 each carry phosphoserine. Basic and acidic residues predominate over residues 145–165 (SDTRRKVKSAEKISTQRHEVI). Positions 180–193 (SVTSKKTGPLSAQP) are enriched in polar residues. Residue lysine 185 forms a Glycyl lysine isopeptide (Lys-Gly) (interchain with G-Cter in SUMO2) linkage. Phosphoserine occurs at positions 190 and 194. The segment covering 208–224 (TQKKGKISHDKRKKSRS) has biased composition (basic residues). Serine 232 is modified (phosphoserine). 2 coiled-coil regions span residues 297 to 356 (QMLT…NAAY) and 397 to 417 (LLGA…LLDQ). The Nuclear localization signal signature appears at 303 to 320 (KRKNAKMISDIEKKRQRM).

Belongs to the CENP-U/AME1 family. Component of the CENPA-NAC complex, at least composed of CENPA, CENPC, CENPH, CENPM, CENPN, CENPT and CENPU. The CENPA-NAC complex interacts with the CENPA-CAD complex, composed of CENPI, CENPK, CENPL, CENPO, CENPP, CENPQ, CENPR and CENPS. Interacts with MLF1. Interacts with PLK1. As to quaternary structure, (Microbial infection) Interacts with the N-terminal domain of Kaposi's sarcoma-associated herpesvirus latent nuclear antigen (LNA). Phosphorylated by PLK1 at Thr-78, creating a self-tethering site that specifically interacts with the polo-box domain of PLK1. In terms of tissue distribution, expressed at high levels in the testis, fetal liver, thymus, bone marrow and at lower levels in the lymph nodes, placenta, colon and spleen. Present in all cell lines examined, including B-cells, T-cells, epithelial cells and fibroblast cells. Expressed at high levels in glioblastoma cell lines.

The protein localises to the cytoplasm. It is found in the nucleus. The protein resides in the chromosome. It localises to the centromere. Its subcellular location is the kinetochore. Its function is as follows. Component of the CENPA-NAC (nucleosome-associated) complex, a complex that plays a central role in assembly of kinetochore proteins, mitotic progression and chromosome segregation. The CENPA-NAC complex recruits the CENPA-CAD (nucleosome distal) complex and may be involved in incorporation of newly synthesized CENPA into centromeres. Plays an important role in the correct PLK1 localization to the mitotic kinetochores. A scaffold protein responsible for the initial recruitment and maintenance of the kinetochore PLK1 population until its degradation. Involved in transcriptional repression. In Homo sapiens (Human), this protein is Centromere protein U (CENPU).